A 388-amino-acid polypeptide reads, in one-letter code: Protein DVU_0534 (388 aa).

10 consecutive transmembrane segments (helical) span residues 10–31, 57–78, 89–106, 130–144, 166–191, 199–222, 254–265, 291–306, 316–328, and 354–368; these read LMTP…LTVL, LLCG…YLFG, AITT…ALNY, EVGL…VLFV, LTLV…LFLI, LWYS…SMVI, AASFVLAGYFMI, MLGF…ALGV, FASV…IVMN, and IGIS…ITVY.

It belongs to the NrfD family.

It is found in the cell membrane. HMWC (high-molecular-weight cytochrome c), ORF2, ORF3, ORF4, ORF5 and ORF6 in the HMC operon form a transmembrane protein complex that allows electron flow from the periplasmic hydrogenase to the cytoplasmic enzymes that catalyze reduction of sulfates. The chain is Protein DVU_0534 from Nitratidesulfovibrio vulgaris (strain ATCC 29579 / DSM 644 / CCUG 34227 / NCIMB 8303 / VKM B-1760 / Hildenborough) (Desulfovibrio vulgaris).